The following is a 192-amino-acid chain: Epididymal-specific lipocalin-5 (192 aa).

A signal peptide spans 1-26; sequence MCSVARHMESIMLFTLLGLCVGLAAG. Residues Cys-89 and Cys-183 are joined by a disulfide bond.

It belongs to the calycin superfamily. Lipocalin family. 2 different forms with differently processed N-termini exist. In terms of tissue distribution, epididymal fluid of the caudal and corpus regions (at protein level).

The protein localises to the secreted. In terms of biological role, associates with spermatozoa in the epididymal fluid but does not bind tightly to them. Binds both all-trans and 13-cis retinoic acid. May act as a retinoid carrier protein which is required for epididymal function and/or sperm maturation. The polypeptide is Epididymal-specific lipocalin-5 (Mus musculus (Mouse)).